The following is a 121-amino-acid chain: Small ribosomal subunit protein uS13 (121 aa).

The disordered stretch occupies residues 95–121 (GLPVRGQKTKTNARTRKGKRKTVGAKS).

This sequence belongs to the universal ribosomal protein uS13 family. As to quaternary structure, part of the 30S ribosomal subunit. Forms a loose heterodimer with protein S19. Forms two bridges to the 50S subunit in the 70S ribosome.

Functionally, located at the top of the head of the 30S subunit, it contacts several helices of the 16S rRNA. In the 70S ribosome it contacts the 23S rRNA (bridge B1a) and protein L5 of the 50S subunit (bridge B1b), connecting the 2 subunits; these bridges are implicated in subunit movement. Contacts the tRNAs in the A and P-sites. This Campylobacter jejuni subsp. jejuni serotype O:23/36 (strain 81-176) protein is Small ribosomal subunit protein uS13.